Reading from the N-terminus, the 305-residue chain is UDP-3-O-acyl-N-acetylglucosamine deacetylase (305 aa).

His-78, His-237, and Asp-241 together coordinate Zn(2+). His-264 serves as the catalytic Proton donor.

This sequence belongs to the LpxC family. The cofactor is Zn(2+).

The catalysed reaction is a UDP-3-O-[(3R)-3-hydroxyacyl]-N-acetyl-alpha-D-glucosamine + H2O = a UDP-3-O-[(3R)-3-hydroxyacyl]-alpha-D-glucosamine + acetate. It functions in the pathway glycolipid biosynthesis; lipid IV(A) biosynthesis; lipid IV(A) from (3R)-3-hydroxytetradecanoyl-[acyl-carrier-protein] and UDP-N-acetyl-alpha-D-glucosamine: step 2/6. Catalyzes the hydrolysis of UDP-3-O-myristoyl-N-acetylglucosamine to form UDP-3-O-myristoylglucosamine and acetate, the committed step in lipid A biosynthesis. The polypeptide is UDP-3-O-acyl-N-acetylglucosamine deacetylase (Cupriavidus pinatubonensis (strain JMP 134 / LMG 1197) (Cupriavidus necator (strain JMP 134))).